A 379-amino-acid polypeptide reads, in one-letter code: Cytochrome b (379 aa).

4 consecutive transmembrane segments (helical) span residues 33-53 (FGSL…FLAM), 77-98 (WLIR…FIHV), 113-133 (WNIG…GYVL), and 178-198 (FFAF…VHLL). Residues His-83 and His-97 each coordinate heme b. Heme b is bound by residues His-182 and His-196. Residue His-201 participates in a ubiquinone binding. The next 4 helical transmembrane spans lie at 226 to 246 (IKDL…ALFF), 288 to 308 (LGGV…PLLN), 320 to 340 (ITQT…WIGG), and 347 to 367 (FTMX…ILMP).

This sequence belongs to the cytochrome b family. As to quaternary structure, the cytochrome bc1 complex contains 11 subunits: 3 respiratory subunits (MT-CYB, CYC1 and UQCRFS1), 2 core proteins (UQCRC1 and UQCRC2) and 6 low-molecular weight proteins (UQCRH/QCR6, UQCRB/QCR7, UQCRQ/QCR8, UQCR10/QCR9, UQCR11/QCR10 and a cleavage product of UQCRFS1). This cytochrome bc1 complex then forms a dimer. Heme b is required as a cofactor.

Its subcellular location is the mitochondrion inner membrane. In terms of biological role, component of the ubiquinol-cytochrome c reductase complex (complex III or cytochrome b-c1 complex) that is part of the mitochondrial respiratory chain. The b-c1 complex mediates electron transfer from ubiquinol to cytochrome c. Contributes to the generation of a proton gradient across the mitochondrial membrane that is then used for ATP synthesis. The polypeptide is Cytochrome b (MT-CYB) (Necromys amoenus (Pleasant bolo mouse)).